We begin with the raw amino-acid sequence, 328 residues long: Flap endonuclease 1 (328 aa).

The interval 1–98 (MGVKFKDITN…ETQEERINIK (98 aa)) is N-domain. Mg(2+) contacts are provided by aspartate 27, aspartate 80, glutamate 152, glutamate 154, aspartate 173, aspartate 175, and aspartate 227. Positions 116-248 (AARKYAARTT…KGIKLIHKYG (133 aa)) are I-domain. The interaction with PCNA stretch occupies residues 320–328 (AQSSLEDWF).

Belongs to the XPG/RAD2 endonuclease family. FEN1 subfamily. In terms of assembly, interacts with PCNA. PCNA stimulates the nuclease activity without altering cleavage specificity. Requires Mg(2+) as cofactor.

Its function is as follows. Structure-specific nuclease with 5'-flap endonuclease and 5'-3' exonuclease activities involved in DNA replication and repair. During DNA replication, cleaves the 5'-overhanging flap structure that is generated by displacement synthesis when DNA polymerase encounters the 5'-end of a downstream Okazaki fragment. Binds the unpaired 3'-DNA end and kinks the DNA to facilitate 5' cleavage specificity. Cleaves one nucleotide into the double-stranded DNA from the junction in flap DNA, leaving a nick for ligation. Also involved in the base excision repair (BER) pathway. Acts as a genome stabilization factor that prevents flaps from equilibrating into structures that lead to duplications and deletions. Also possesses 5'-3' exonuclease activity on nicked or gapped double-stranded DNA. In Methanosphaera stadtmanae (strain ATCC 43021 / DSM 3091 / JCM 11832 / MCB-3), this protein is Flap endonuclease 1.